Here is a 142-residue protein sequence, read N- to C-terminus: Nucleoside diphosphate kinase (142 aa).

Positions 11, 59, 87, 93, 104, and 114 each coordinate ATP. Histidine 117 (pros-phosphohistidine intermediate) is an active-site residue.

This sequence belongs to the NDK family. As to quaternary structure, homotetramer. Requires Mg(2+) as cofactor.

Its subcellular location is the cytoplasm. It catalyses the reaction a 2'-deoxyribonucleoside 5'-diphosphate + ATP = a 2'-deoxyribonucleoside 5'-triphosphate + ADP. It carries out the reaction a ribonucleoside 5'-diphosphate + ATP = a ribonucleoside 5'-triphosphate + ADP. Major role in the synthesis of nucleoside triphosphates other than ATP. The ATP gamma phosphate is transferred to the NDP beta phosphate via a ping-pong mechanism, using a phosphorylated active-site intermediate. The polypeptide is Nucleoside diphosphate kinase (Pectobacterium atrosepticum (strain SCRI 1043 / ATCC BAA-672) (Erwinia carotovora subsp. atroseptica)).